A 130-amino-acid polypeptide reads, in one-letter code: Small ribosomal subunit protein uS11c (130 aa).

It belongs to the universal ribosomal protein uS11 family. Part of the 30S ribosomal subunit.

It localises to the plastid. The protein resides in the chloroplast. This is Small ribosomal subunit protein uS11c from Bigelowiella natans (Pedinomonas minutissima).